The following is a 282-amino-acid chain: Armadillo repeat-containing protein 1 (282 aa).

Residue Met1 is modified to N-acetylmethionine. An ARM repeat occupies 39–81 (GCLPGLILFMDHPNPPVVHSALLALRYLAECRANREKMKGELG). Residue Thr137 is modified to Phosphothreonine. Phosphoserine occurs at positions 189, 246, 260, and 267. Residues 239–261 (DYLPEDESPTKEQDKAVSRVGSH) form a disordered region. Residues 246–255 (SPTKEQDKAV) show a composition bias toward basic and acidic residues.

Interacts with mitochondrial contact site and cristae organizing system (MICOS) complex components IMMT/MIC60 and MICOS10/MIC10. Interacts with mitochondrial outer membrane sorting assembly machinery (SAM) complex components SAMM50 and MTX1.

It localises to the cytoplasm. The protein resides in the mitochondrion. The protein localises to the mitochondrion outer membrane. Functionally, in association with mitochondrial contact site and cristae organizing system (MICOS) complex components and mitochondrial outer membrane sorting assembly machinery (SAM) complex components may regulate mitochondrial dynamics playing a role in determining mitochondrial length, distribution and motility. The chain is Armadillo repeat-containing protein 1 (Armc1) from Mus musculus (Mouse).